The following is a 376-amino-acid chain: tRNA-specific 2-thiouridylase MnmA (376 aa).

ATP is bound by residues 14 to 21 (GMSGGVDS) and Met-40. The interaction with target base in tRNA stretch occupies residues 100–102 (NPD). Cys-105 functions as the Nucleophile in the catalytic mechanism. Cysteines 105 and 202 form a disulfide. ATP is bound at residue Gly-129. Residues 152-154 (KDQ) are interaction with tRNA. Residue Cys-202 is the Cysteine persulfide intermediate of the active site. The interaction with tRNA stretch occupies residues 315 to 316 (RY).

It belongs to the MnmA/TRMU family.

The protein resides in the cytoplasm. The catalysed reaction is S-sulfanyl-L-cysteinyl-[protein] + uridine(34) in tRNA + AH2 + ATP = 2-thiouridine(34) in tRNA + L-cysteinyl-[protein] + A + AMP + diphosphate + H(+). In terms of biological role, catalyzes the 2-thiolation of uridine at the wobble position (U34) of tRNA, leading to the formation of s(2)U34. The protein is tRNA-specific 2-thiouridylase MnmA of Lactococcus lactis subsp. cremoris (strain SK11).